Consider the following 437-residue polypeptide: Na(+)/H(+) antiporter NhaA (437 aa).

11 helical membrane-spanning segments follow: residues 12-32, 65-85, 103-123, 133-153, 162-182, 186-206, 214-234, 308-328, 333-353, 377-397, and 412-432; these read SMNI…AVIA, LTMI…MVGL, ALPF…YSMV, GLAI…SLLG, IFLT…IAIF, HVAY…YFIG, IFFL…GIHS, GAVN…VMFS, VIGG…FLGI, ISGV…IANL, and LGVL…LHWV.

Belongs to the NhaA Na(+)/H(+) (TC 2.A.33) antiporter family.

It localises to the cell inner membrane. The catalysed reaction is Na(+)(in) + 2 H(+)(out) = Na(+)(out) + 2 H(+)(in). Its function is as follows. Na(+)/H(+) antiporter that extrudes sodium in exchange for external protons. In Bacteroides fragilis (strain YCH46), this protein is Na(+)/H(+) antiporter NhaA.